Here is a 325-residue protein sequence, read N- to C-terminus: MEEEILWAEKYRPKSLDEIVNQKEIVERLKKFVKEKNMPHLLFAGPPGTGKTTAALALVRDLYGNNYRQYFLELNASDERGIDVIRNKVKEFARTVASNNVPFKVILLDEADNMTADAQQALRRTMELYTETTRFILACNYLSKIIEPIQSRTALFRFYPLKKEDVVNRLIQIAKNEKVEFDPKGIETIFDITQGDMRKAINVIQAASAYGKITVETVYKVLGLAQPKEIREMLHLALSGKFLQARDKLRELLINYGLSGEDIIKQVHKELTGNEISIPDDLKVILVDYAGEVEFRIMEGADDEIQLSAFLAKLALHAEKYSGGK.

ATP is bound at residue 45–52 (GPPGTGKT).

Belongs to the activator 1 small subunits family. RfcS subfamily. Heteromultimer composed of small subunits (RfcS) and large subunits (RfcL).

Part of the RFC clamp loader complex which loads the PCNA sliding clamp onto DNA. The protein is Replication factor C small subunit of Sulfolobus acidocaldarius (strain ATCC 33909 / DSM 639 / JCM 8929 / NBRC 15157 / NCIMB 11770).